A 103-amino-acid polypeptide reads, in one-letter code: Small ribosomal subunit protein uS10 (103 aa).

This sequence belongs to the universal ribosomal protein uS10 family. As to quaternary structure, part of the 30S ribosomal subunit.

In terms of biological role, involved in the binding of tRNA to the ribosomes. This Chromohalobacter salexigens (strain ATCC BAA-138 / DSM 3043 / CIP 106854 / NCIMB 13768 / 1H11) protein is Small ribosomal subunit protein uS10.